The sequence spans 220 residues: Fructose-6-phosphate aldolase (220 aa).

K85 serves as the catalytic Schiff-base intermediate with substrate.

This sequence belongs to the transaldolase family. Type 3A subfamily. In terms of assembly, homodecamer.

The protein localises to the cytoplasm. It catalyses the reaction beta-D-fructose 6-phosphate = dihydroxyacetone + D-glyceraldehyde 3-phosphate. Functionally, catalyzes the reversible formation of fructose 6-phosphate from dihydroxyacetone and D-glyceraldehyde 3-phosphate via an aldolization reaction. This chain is Fructose-6-phosphate aldolase, found in Salmonella arizonae (strain ATCC BAA-731 / CDC346-86 / RSK2980).